A 146-amino-acid polypeptide reads, in one-letter code: Ribonuclease H (146 aa).

Residues 1 to 143 (MKKRVTIYTD…CDELARQAIK (143 aa)) enclose the RNase H type-1 domain. The Mg(2+) site is built by Asp-10, Glu-48, Asp-70, and Asp-135.

This sequence belongs to the RNase H family. As to quaternary structure, monomer. Mg(2+) is required as a cofactor.

It is found in the cytoplasm. The catalysed reaction is Endonucleolytic cleavage to 5'-phosphomonoester.. In terms of biological role, endonuclease that specifically degrades the RNA of RNA-DNA hybrids. The chain is Ribonuclease H from Chlorobium limicola (strain DSM 245 / NBRC 103803 / 6330).